A 221-amino-acid polypeptide reads, in one-letter code: Probable septum site-determining protein MinC (221 aa).

This sequence belongs to the MinC family. In terms of assembly, interacts with MinD and FtsZ.

Its function is as follows. Cell division inhibitor that blocks the formation of polar Z ring septums. Rapidly oscillates between the poles of the cell to destabilize FtsZ filaments that have formed before they mature into polar Z rings. Prevents FtsZ polymerization. This is Probable septum site-determining protein MinC from Prochlorococcus marinus (strain SARG / CCMP1375 / SS120).